The primary structure comprises 602 residues: SAGA complex subunit SPT8 (602 aa).

Residues 1 to 141 form a disordered region; it reads MDEVDDILIN…REASSSTHEA (141 aa). 2 stretches are compositionally biased toward acidic residues: residues 14–23 and 36–75; these read VDDEEDDEEM and EGND…DGED. T85 carries the post-translational modification Phosphothreonine. A phosphoserine mark is found at S108, S123, and S131. WD repeat units follow at residues 173-212 and 305-346; these read PIQT…EGKL and GHTQ…NEFK. The tract at residues 366–418 is disordered; that stretch reads VSGNVNSGKENENADDDMDSLFGDEDEDEKQDAGNEPVETGDGSNGEENKEQI. Over residues 378–395 the composition is skewed to acidic residues; that stretch reads NADDDMDSLFGDEDEDEK. WD repeat units lie at residues 415-454, 506-544, and 560-600; these read KEQI…SPAL, SISG…DASN, and HHGG…YDID. Residue S451 is modified to Phosphoserine.

Belongs to the WD repeat SPT8 family. As to quaternary structure, component of the 1.8 MDa SAGA (Spt-Ada-Gcn5 acetyltransferase) complex, which is composed of 19 subunits TRA1, SPT7, TAF5, NGG1/ADA3, SGF73, SPT20/ADA5, SPT8, TAF12, TAF6, HFI1/ADA1, UBP8, GCN5, ADA2, SPT3, SGF29, TAF10, TAF9, SGF11 and SUS1. The SAGA complex is composed of 4 modules, namely the HAT (histone acetyltransferase) module (GCN5, ADA2, NGG1/ADA3 and SGF29), the DUB (deubiquitinating) module (UBP8, SGF11, SGF73 and SUS1), the core or TAF (TBP-associated factor) module (TAF5, TAF6, TAF9, TAF10 and TAF12), and the Tra1 or SPT (Suppressor of Ty) module (TRA1, HFI1/ADA1, SPT3, SPT7, SPT8 and SPT20/ADA5). The Tra1/SPT module binds activators, the core module recruits TBP (TATA-binding protein), the HAT module contains the histone H3 acetyltransferase GCN5, and the DUB module comprises the histone H2B deubiquitinase UBP8.

The protein resides in the nucleus. Component of the transcription coactivator SAGA complex. SAGA acts as a general cofactor required for essentially all RNA polymerase II transcription. At the promoters, SAGA is required for transcription pre-initiation complex (PIC) recruitment. It influences RNA polymerase II transcriptional activity through different activities such as TBP interaction (via core/TAF module) and promoter selectivity, interaction with transcription activators (via Tra1/SPT module), and chromatin modification through histone acetylation (via HAT module) and deubiquitination (via DUB module). SAGA preferentially acetylates histones H3 (to form H3K9ac, H3K14ac, H3K18ac and H3K23ac) and H2B and deubiquitinates histone H2B. SAGA interacts with DNA via upstream activating sequences (UASs). During SAGA-mediated transcriptional inhibition, SPT3 and SPT8 prevent binding of TBP to the TATA box. This is SAGA complex subunit SPT8 (SPT8) from Saccharomyces cerevisiae (strain ATCC 204508 / S288c) (Baker's yeast).